The following is a 408-amino-acid chain: MIVMASSLWYLYEFARKKWIKRFIDAKSDKSSYIPPERYRKIPPIVKFPEKCISCEGCKESCPAFAIEMIYNEEYNKKLPVIDEGSCVACANCIEVCPTGVLEMDKHRVETEGLFFDKPKYSNLIIDEEVCVRCGNCERACPINVIERKEGKYVINMALCISCKECIKVCPIENAIVVVDEKTLKEKIDKAFEIKNKKITGKLEIKENVIEKIPHIVSGLCVSCGICKDVCVGEIDLNEKKVVECVKCGLCIEVCSTTAIRIYKPIIPKRKDICYVIDEDLCIGCRICQKVCGSGAIKISKETKLPYIVPELCVRGGACARECPVGAIKVVKPEEAEEAVKVRIIEDKIIESIEKDLVLYTEKYGKVKEEIEKLSLKKLKEELKRRVYEENKRIMEKKRELYDKGNNS.

8 4Fe-4S ferredoxin-type domains span residues Ile42–Asn72, Lys78–His107, Ser122–Gly151, Gly151–Glu181, Lys212–Lys241, Gly233–Pro265, Ile273–Glu302, and Lys304–Pro333. 16 residues coordinate [4Fe-4S] cluster: Cys52, Cys55, Cys58, Cys62, Cys87, Cys90, Cys93, Cys97, Cys131, Cys134, Cys137, Cys141, Cys160, Cys163, Cys166, and Cys170. The [4Fe-4S] cluster site is built by Cys282, Cys285, Cys288, and Cys292.

This is an uncharacterized protein from Methanocaldococcus jannaschii (strain ATCC 43067 / DSM 2661 / JAL-1 / JCM 10045 / NBRC 100440) (Methanococcus jannaschii).